A 515-amino-acid chain; its full sequence is 1-pyrroline-5-carboxylate dehydrogenase (515 aa).

Active-site residues include Glu286 and Cys320.

This sequence belongs to the aldehyde dehydrogenase family. RocA subfamily.

The catalysed reaction is L-glutamate 5-semialdehyde + NAD(+) + H2O = L-glutamate + NADH + 2 H(+). It functions in the pathway amino-acid degradation; L-proline degradation into L-glutamate; L-glutamate from L-proline: step 2/2. The protein is 1-pyrroline-5-carboxylate dehydrogenase of Anoxybacillus flavithermus (strain DSM 21510 / WK1).